The sequence spans 168 residues: Peptide methionine sulfoxide reductase 2 (168 aa).

The 129-residue stretch at 40–168 (DVKWNDALTP…NSASLNLKKD (129 aa)) folds into the MsrB domain. C79, C82, C128, and C131 together coordinate Zn(2+). An intrachain disulfide couples C97 to C157. The Nucleophile role is filled by C157.

Belongs to the MsrB Met sulfoxide reductase family. The cofactor is Zn(2+).

The catalysed reaction is L-methionyl-[protein] + [thioredoxin]-disulfide + H2O = L-methionyl-(R)-S-oxide-[protein] + [thioredoxin]-dithiol. Functionally, methionine-R-sulfoxide reductase which catalyzes the reduction of methionine sulfoxide (MetSO) to methionine in proteins. Plays a protective role against oxidative stress by restoring activity to proteins that have been inactivated by methionine oxidation. Protects iron-sulfur clusters from oxidative inactivation along with MXR1. Involved in the regulation of lifespan. The sequence is that of Peptide methionine sulfoxide reductase 2 (MXR2) from Saccharomyces cerevisiae (strain ATCC 204508 / S288c) (Baker's yeast).